We begin with the raw amino-acid sequence, 58 residues long: Photosystem II reaction center protein K (58 aa).

Residues 1–21 constitute a propeptide that is removed on maturation; sequence MFNAYLDTVLDLSANGTVILA. The helical transmembrane segment at 29-49 threads the bilayer; it reads IFDPIVDVMPIIPVFFLLLAF.

Belongs to the PsbK family. PSII is composed of 1 copy each of membrane proteins PsbA, PsbB, PsbC, PsbD, PsbE, PsbF, PsbH, PsbI, PsbJ, PsbK, PsbL, PsbM, PsbT, PsbX, PsbY, PsbZ, Psb30/Ycf12, at least 3 peripheral proteins of the oxygen-evolving complex and a large number of cofactors. It forms dimeric complexes.

Its subcellular location is the plastid. It localises to the chloroplast thylakoid membrane. Functionally, one of the components of the core complex of photosystem II (PSII). PSII is a light-driven water:plastoquinone oxidoreductase that uses light energy to abstract electrons from H(2)O, generating O(2) and a proton gradient subsequently used for ATP formation. It consists of a core antenna complex that captures photons, and an electron transfer chain that converts photonic excitation into a charge separation. The protein is Photosystem II reaction center protein K of Staurastrum punctulatum (Green alga).